Reading from the N-terminus, the 248-residue chain is DNA repair protein RecO (248 aa).

It belongs to the RecO family.

Functionally, involved in DNA repair and RecF pathway recombination. This chain is DNA repair protein RecO, found in Bartonella tribocorum (strain CIP 105476 / IBS 506).